The primary structure comprises 452 residues: NADH-cytochrome b5 reductase-like protein alnC (452 aa).

The region spanning 4-80 is the Cytochrome b5 heme-binding domain; it reads PASITLAEVA…LKTLLVGSLQ (77 aa). Residue 33 to 38 participates in FMN binding; it reads AEYRED. Heme contacts are provided by His39 and His63. FMN is bound by residues 80 to 83 and 116 to 125; these read QSKT and NDTSKYGQLP. Helical transmembrane passes span 120–140 and 166–186; these read KYGQ…FFTL and VGFL…ATFV. The 100-residue stretch at 225 to 324 folds into the FAD-binding FR-type domain; that stretch reads NTQQFLTLVD…RGPFGRYSPS (100 aa). 302-305 is a binding site for FAD; sequence YLLN. Residues 389 to 390 and 395 to 399 contribute to the NADP(+) site; these read GQ and WKGLR.

This sequence belongs to the flavoprotein pyridine nucleotide cytochrome reductase family. The cofactor is FAD. It depends on FMN as a cofactor.

It is found in the membrane. It functions in the pathway polyketide biosynthesis. NADH-cytochrome b5 reductase-like protein; part of the gene cluster that mediates the biosynthesis of asperlin, a polyketide showing anti-inflammatory, antitumor and antibiotic activities. The first step of the asperlin biosynthesis is the production of the intermediate 2,4,6-octatrienoic acid by the highly redusing polyketide synthase alnA with cleavage of the PKS product by the esterase alnB. 2,4,6-octatrienoic acid is further converted to asperlin via several steps involving the remaining enzymes from the cluster. The protein is NADH-cytochrome b5 reductase-like protein alnC of Emericella nidulans (strain FGSC A4 / ATCC 38163 / CBS 112.46 / NRRL 194 / M139) (Aspergillus nidulans).